Reading from the N-terminus, the 449-residue chain is Chlorobenzene dioxygenase subunit alpha (449 aa).

The 110-residue stretch at 54–163 (WLLLGHETQI…VATYKGLIFA (110 aa)) folds into the Rieske domain. [2Fe-2S] cluster contacts are provided by Cys96, His98, Cys116, and His119. Fe cation is bound by residues His222, His228, and Asp376.

The protein belongs to the bacterial ring-hydroxylating dioxygenase alpha subunit family. As to quaternary structure, this dioxygenase system consists of four proteins: the two subunits of the oxygenase component (TecA1 and TecA2), a ferredoxin (TecA3) and a ferredoxin reductase (TecA4). The cofactor is [2Fe-2S] cluster. It depends on Fe cation as a cofactor.

The enzyme catalyses chlorobenzene + NADH + O2 + H(+) = (1R,2R)-3-chlorocyclohexa-3,5-diene-1,2-diol + NAD(+). It functions in the pathway aromatic compound metabolism. Functionally, part of the oxygenase component of the chlorobenzene dioxygenase system that catalyzes the dihydroxylation of a range of aromatic compounds, including chlorinated benzenes and toluenes, and dinuclear aromatics such as biphenyl and dibenzo-p-dioxin. The alpha subunit is responsible for substrate specificity. The polypeptide is Chlorobenzene dioxygenase subunit alpha (Cupriavidus sp. (strain PS12)).